A 134-amino-acid polypeptide reads, in one-letter code: Profilin-4 (134 aa).

Cysteines 13 and 118 form a disulfide. The short motif at 84–100 (AVIRGKKGSGGITIKKT) is the Involved in PIP2 interaction element. Threonine 114 is subject to Phosphothreonine.

Belongs to the profilin family. As to quaternary structure, occurs in many kinds of cells as a complex with monomeric actin in a 1:1 ratio. Phosphorylated by MAP kinases.

The protein resides in the cytoplasm. The protein localises to the cytoskeleton. Functionally, binds to actin and affects the structure of the cytoskeleton. At high concentrations, profilin prevents the polymerization of actin, whereas it enhances it at low concentrations. This chain is Profilin-4, found in Olea europaea (Common olive).